The chain runs to 249 residues: Enolase-phosphatase E1 (249 aa).

Belongs to the HAD-like hydrolase superfamily. MasA/MtnC family. As to quaternary structure, monomer. Mg(2+) is required as a cofactor.

It carries out the reaction 5-methylsulfanyl-2,3-dioxopentyl phosphate + H2O = 1,2-dihydroxy-5-(methylsulfanyl)pent-1-en-3-one + phosphate. The protein operates within amino-acid biosynthesis; L-methionine biosynthesis via salvage pathway; L-methionine from S-methyl-5-thio-alpha-D-ribose 1-phosphate: step 3/6. It functions in the pathway amino-acid biosynthesis; L-methionine biosynthesis via salvage pathway; L-methionine from S-methyl-5-thio-alpha-D-ribose 1-phosphate: step 4/6. In terms of biological role, bifunctional enzyme that catalyzes the enolization of 2,3-diketo-5-methylthiopentyl-1-phosphate (DK-MTP-1-P) into the intermediate 2-hydroxy-3-keto-5-methylthiopentenyl-1-phosphate (HK-MTPenyl-1-P), which is then dephosphorylated to form the acireductone 1,2-dihydroxy-3-keto-5-methylthiopentene (DHK-MTPene). The chain is Enolase-phosphatase E1 from Synechococcus sp. (strain RCC307).